The primary structure comprises 141 residues: Large ribosomal subunit protein uL11 (141 aa).

This sequence belongs to the universal ribosomal protein uL11 family. As to quaternary structure, part of the ribosomal stalk of the 50S ribosomal subunit. Interacts with L10 and the large rRNA to form the base of the stalk. L10 forms an elongated spine to which L12 dimers bind in a sequential fashion forming a multimeric L10(L12)X complex. Post-translationally, one or more lysine residues are methylated.

Functionally, forms part of the ribosomal stalk which helps the ribosome interact with GTP-bound translation factors. In Lactobacillus johnsonii (strain CNCM I-12250 / La1 / NCC 533), this protein is Large ribosomal subunit protein uL11.